Here is a 287-residue protein sequence, read N- to C-terminus: Zinc transporter ZIP9 (287 aa).

Residues 4 to 24 traverse the membrane as a helical segment; the sequence is FLSISLLSLAMLVGCYVAGII. N-linked (GlcNAc...) asparagine glycosylation is present at asparagine 29. The next 5 helical transmembrane spans lie at 35-55, 107-127, 147-167, 177-197, and 211-231; these read LKLVTVLGAGLLCGTALAVIV, AYIGVSLVLGFVFMLLVDQIG, ITTTLGLVVHAAADGVALGAA, LIVFVAIMLHKAPAAFGLVSF, and HLLVFALAAPAMSMLTYLGLS. An N-linked (GlcNAc...) asparagine glycan is attached at asparagine 242. Residues 245-265 traverse the membrane as a helical segment; that stretch reads GVAMLFSAGTFLYVATVHVLP. Residues 268–287 are disordered; the sequence is TSTNQSGSSLSPRPLPSGKN. N-linked (GlcNAc...) asparagine glycosylation is present at asparagine 271. The span at 273–287 shows a compositional bias: low complexity; it reads SGSSLSPRPLPSGKN.

This sequence belongs to the ZIP transporter (TC 2.A.5) family.

It is found in the golgi apparatus. The protein resides in the trans-Golgi network membrane. It localises to the cell membrane. The protein localises to the cytoplasm. Its subcellular location is the perinuclear region. It is found in the mitochondrion. The protein resides in the nucleus. The enzyme catalyses Zn(2+)(in) = Zn(2+)(out). In terms of biological role, transports zinc ions across cell and organelle membranes into the cytoplasm and regulates intracellular zinc homeostasis. Participates in the zinc ions efflux out of the secretory compartments. Regulates intracellular zinc level, resulting in the enhancement of AKT1 and MAPK3/MAPK1 (Erk1/2) phosphorylation in response to the BCR activation. Also functions as a membrane androgen receptor that mediates, through a G protein, the non-classical androgen signaling pathway, characterized by the activation of MAPK3/MAPK1 (Erk1/2) and transcription factors CREB1 or ATF1. This pathway contributes to CLDN1 and CLDN5 expression and tight junction formation between adjacent Sertoli cells. Mediates androgen-induced vascular endothelial cell proliferation through activation of an inhibitory G protein leading to the AKT1 and MAPK3/MAPK1 (Erk1/2) activation which in turn modulate inhibition (phosphorylation) of GSK3B and CCND1 transcription. Moreover, has dual functions as a membrane-bound androgen receptor and as an androgen-dependent zinc transporter both of which are mediated through an inhibitory G protein (Gi) that mediates both MAP kinase and zinc signaling leading to the androgen-dependent apoptotic process. The chain is Zinc transporter ZIP9 from Rattus norvegicus (Rat).